The following is a 163-amino-acid chain: Adenosine 5'-monophosphoramidase HINT2 (163 aa).

A mitochondrion-targeting transit peptide spans Met-1–Ala-17. Residues Ile-55–Gly-163 enclose the HIT domain. AMP is bound by residues Ser-63 and Asp-80. Lys-119 carries the post-translational modification N6-acetyllysine. Asn-136 lines the AMP pocket. Lys-139 carries the N6-acetyllysine modification. AMP contacts are provided by residues Ala-142–Val-145 and His-149–His-151. Positions His-147–His-151 match the Histidine triad motif motif. Residue His-149 is the Tele-AMP-histidine intermediate of the active site.

The protein belongs to the HINT family.

Its subcellular location is the mitochondrion. It carries out the reaction adenosine 5'-phosphoramidate + H2O = AMP + NH4(+). Exhibits adenosine 5'-monophosphoramidase activity, hydrolyzing purine nucleotide phosphoramidates with a single phosphate group such as adenosine 5'monophosphoramidate (AMP-NH2) to yield AMP and NH2. Hydrolyzes adenosine 5'-O-p-nitrophenylphosphoramidate (AMP-pNA). May be involved in steroid biosynthesis. May play a role in apoptosis. This is Adenosine 5'-monophosphoramidase HINT2 from Bos taurus (Bovine).